Here is a 198-residue protein sequence, read N- to C-terminus: Small ribosomal subunit protein uS4 (198 aa).

The S4 RNA-binding domain maps to threonine 90–asparagine 152.

The protein belongs to the universal ribosomal protein uS4 family. As to quaternary structure, part of the 30S ribosomal subunit. Contacts protein S5. The interaction surface between S4 and S5 is involved in control of translational fidelity.

Its function is as follows. One of the primary rRNA binding proteins, it binds directly to 16S rRNA where it nucleates assembly of the body of the 30S subunit. With S5 and S12 plays an important role in translational accuracy. This chain is Small ribosomal subunit protein uS4, found in Finegoldia magna (strain ATCC 29328 / DSM 20472 / WAL 2508) (Peptostreptococcus magnus).